The following is a 408-amino-acid chain: COP9 signalosome complex subunit 4 (408 aa).

The PCI domain maps to 194 to 374; that stretch reads RIQDARRRFL…GIIYFESNTT (181 aa).

It belongs to the CSN4 family. Component of the COP9 signalosome (CSN) complex.

The protein localises to the cytoplasm. The protein resides in the nucleus. Component of the COP9 signalosome (CSN) complex that acts as an regulator of the ubiquitin (Ubl) conjugation pathway by mediating the deneddylation of the cullin subunit of SCF-type E3 ubiquitin-protein ligase complexes. The CSN complex seems to link protein degradation to sexual development. Required for fruit body formation. The chain is COP9 signalosome complex subunit 4 (csnD) from Emericella nidulans (strain FGSC A4 / ATCC 38163 / CBS 112.46 / NRRL 194 / M139) (Aspergillus nidulans).